Reading from the N-terminus, the 299-residue chain is Streptogrisin-B (299 aa).

The first 38 residues, 1–38, serve as a signal peptide directing secretion; the sequence is MRIKRTSNRSNAARRVRTTAVLAGLAAVAALAVPTANA. Residues 39 to 114 constitute a propeptide that is removed on maturation; sequence ETPRTFSANQ…ERTPGKFTKL (76 aa). A disulfide bridge connects residues Cys128 and Cys148. Catalysis depends on charge relay system residues His147, Asp177, and Ser255. Cys249 and Cys276 are joined by a disulfide.

It belongs to the peptidase S1 family. In terms of assembly, monomer.

The enzyme catalyses Hydrolysis of proteins with trypsin-like specificity.. Has a primary specificity for large aliphatic or aromatic amino acids. The protein is Streptogrisin-B (sprB) of Streptomyces griseus.